A 513-amino-acid polypeptide reads, in one-letter code: Glutamate--tRNA ligase 2 (513 aa).

The 'HIGH' region signature appears at 11 to 21 (PSPTGFLHIGS). Positions 240–244 (KLSKR) match the 'KMSKS' region motif. Lysine 243 is a binding site for ATP. Residues 335-383 (NTLLRHLPYREEFGGNTERSTAAYIDIREDASTGLTYKLPLAVELPKKF) enclose the RPE1 insert domain.

The protein belongs to the class-I aminoacyl-tRNA synthetase family. Glutamate--tRNA ligase type 1 subfamily. Monomer.

The protein resides in the cytoplasm. It carries out the reaction tRNA(Glu) + L-glutamate + ATP = L-glutamyl-tRNA(Glu) + AMP + diphosphate. Its function is as follows. Catalyzes the attachment of glutamate to tRNA(Glu) in a two-step reaction: glutamate is first activated by ATP to form Glu-AMP and then transferred to the acceptor end of tRNA(Glu). The protein is Glutamate--tRNA ligase 2 of Rickettsia conorii (strain ATCC VR-613 / Malish 7).